A 606-amino-acid chain; its full sequence is Elongation factor 4 (606 aa).

The tr-type G domain maps to 10 to 192 (KNIRNFSIIA…ALVARVPPPQ (183 aa)). GTP contacts are provided by residues 22–27 (DHGKST) and 139–142 (NKID).

It belongs to the TRAFAC class translation factor GTPase superfamily. Classic translation factor GTPase family. LepA subfamily.

It localises to the cell inner membrane. The catalysed reaction is GTP + H2O = GDP + phosphate + H(+). Required for accurate and efficient protein synthesis under certain stress conditions. May act as a fidelity factor of the translation reaction, by catalyzing a one-codon backward translocation of tRNAs on improperly translocated ribosomes. Back-translocation proceeds from a post-translocation (POST) complex to a pre-translocation (PRE) complex, thus giving elongation factor G a second chance to translocate the tRNAs correctly. Binds to ribosomes in a GTP-dependent manner. The protein is Elongation factor 4 of Nitrosococcus oceani (strain ATCC 19707 / BCRC 17464 / JCM 30415 / NCIMB 11848 / C-107).